A 65-amino-acid polypeptide reads, in one-letter code: Lantibiotic lacticin 3147 A2 (65 aa).

Positions 1-36 are excised as a propeptide; sequence MKEKNMKKNDTIELQLGKYLEDDMIELAEGDESHGG. The residue at position 37 (threonine 37) is a 2-oxobutanoic acid. 2 positions are modified to 2,3-didehydrobutyrine: threonine 38 and threonine 41. Serine 45 and serine 48 each carry 2,3-didehydroalanine (Ser). A cross-link (lanthionine (Ser-Cys)) is located at residues 52 to 56; it reads STNTC. 2 cross-links (beta-methyllanthionine (Thr-Cys)) span residues 58-61 and 62-65; these read TTKC and TRAC.

Post-translationally, maturation of lantibiotics involves the enzymatic conversion of Thr, and Ser into dehydrated AA and the formation of thioether bonds with cysteine. This is followed by membrane translocation and cleavage of the modified precursor. In terms of processing, it is not established whether the 2,3-didehydrobutyrines are the E- or Z-isomers. In the NMR model they were assumed to be the Z-isomer.

It is found in the secreted. Its function is as follows. Lanthionine-containing peptide antibiotic (lantibiotic) active on Gram-positive bacteria. The bactericidal activity of lantibiotics is based on depolarization of energized bacterial cytoplasmic membranes, initiated by the formation of aqueous transmembrane pores. When present individually lacticin 3147 A2 exhibits weak activity towards L.lactis strain AM2 and L.lactis strain HP, and no activity towards L.lactis strain IFPL359, but when combined with lacticin 3147 A1 it displays strong activity towards all three strains. The protein is Lantibiotic lacticin 3147 A2 of Lactococcus lactis subsp. lactis (Streptococcus lactis).